A 363-amino-acid chain; its full sequence is MLFNLIAAHDTSHGGFFNLFHYLTFRSGCACLTALVISLALGNPFIAQLKRIQREGQPIRTVGPERHILEKAGTPTMGGMLILIALFSATLLWADLTNGFVWAVMLTTAAFGAVGFADDYLKLSKRNTTGVSKRTRLGCEFLASLIAGIWLQSLTPPELRNMVAFPFVKDVLLPLGYAFPIFAMITITGFGNAVNFTDGLDGLAIVPVVIAALVFALISYLVGNHVFADYLQLHPVPGTGELAVFCAALIGAGLGFLWFNAPPAAVFMGDTGSLSLGGALGAVAVATKHELVLCIVGGVFVAETLSVVIQIFWFKRTGRRVFLMAPLHHHFEKKGWQEPKIVIRFWIVSIVLGLCGLATLKLR.

10 consecutive transmembrane segments (helical) span residues 27–47, 76–96, 97–117, 137–157, 171–191, 202–222, 242–262, 265–285, 292–312, and 340–360; these read SGCA…PFIA, TMGG…WADL, TNGF…VGFA, LGCE…LTPP, VLLP…TGFG, GLAI…SYLV, LAVF…FNAP, AVFM…AVAV, VLCI…IQIF, and KIVI…LATL.

This sequence belongs to the glycosyltransferase 4 family. MraY subfamily. The cofactor is Mg(2+).

It is found in the cell inner membrane. It carries out the reaction UDP-N-acetyl-alpha-D-muramoyl-L-alanyl-gamma-D-glutamyl-meso-2,6-diaminopimeloyl-D-alanyl-D-alanine + di-trans,octa-cis-undecaprenyl phosphate = di-trans,octa-cis-undecaprenyl diphospho-N-acetyl-alpha-D-muramoyl-L-alanyl-D-glutamyl-meso-2,6-diaminopimeloyl-D-alanyl-D-alanine + UMP. The protein operates within cell wall biogenesis; peptidoglycan biosynthesis. In terms of biological role, catalyzes the initial step of the lipid cycle reactions in the biosynthesis of the cell wall peptidoglycan: transfers peptidoglycan precursor phospho-MurNAc-pentapeptide from UDP-MurNAc-pentapeptide onto the lipid carrier undecaprenyl phosphate, yielding undecaprenyl-pyrophosphoryl-MurNAc-pentapeptide, known as lipid I. This is Phospho-N-acetylmuramoyl-pentapeptide-transferase from Gluconobacter oxydans (strain 621H) (Gluconobacter suboxydans).